The chain runs to 273 residues: Urease accessory protein UreD (273 aa).

This sequence belongs to the UreD family. UreD, UreF and UreG form a complex that acts as a GTP-hydrolysis-dependent molecular chaperone, activating the urease apoprotein by helping to assemble the nickel containing metallocenter of UreC. The UreE protein probably delivers the nickel.

The protein localises to the cytoplasm. In terms of biological role, required for maturation of urease via the functional incorporation of the urease nickel metallocenter. The protein is Urease accessory protein UreD of Rhizobium etli (strain ATCC 51251 / DSM 11541 / JCM 21823 / NBRC 15573 / CFN 42).